The primary structure comprises 548 residues: Probable manganese-dependent inorganic pyrophosphatase (548 aa).

The segment at 1–74 is PPase part 1; the sequence is MKALERVYVI…HIETLEPTVE (74 aa). His-12, Asp-16, and Asp-18 together coordinate Mn(2+). CBS domains lie at 77–132 and 254–311; these read ELKN…RLKI and MSKK…VILV. The tract at residues 306–548 is PPase part 2; sequence KKVILVDHNE…KIGEVLRRER (243 aa). The Mn(2+) site is built by Asp-312, His-334, and Asp-386.

Belongs to the PPase class C family. Requires Mn(2+) as cofactor.

The protein resides in the cytoplasm. It carries out the reaction diphosphate + H2O = 2 phosphate + H(+). The sequence is that of Probable manganese-dependent inorganic pyrophosphatase (ppaC) from Thermotoga maritima (strain ATCC 43589 / DSM 3109 / JCM 10099 / NBRC 100826 / MSB8).